Consider the following 1020-residue polypeptide: Sodium/potassium-transporting ATPase subunit alpha-2 (1020 aa).

A propeptide spanning residues 1 to 5 (MGRGA) is cleaved from the precursor. The tract at residues 1-31 (MGRGAGREYSPAATTAENGGGKKKQKEKELD) is disordered. At 6 to 85 (GREYSPAATT…NALTPPPTTP (80 aa)) the chain is on the cytoplasmic side. Phosphoserine is present on Ser10. The interaction with phosphoinositide-3 kinase stretch occupies residues 80 to 82 (PPP). Residues 86 to 106 (EWVKFCRQLFGGFSILLWIGA) form a helical membrane-spanning segment. Residues 107 to 129 (LLCFLAYGILAAMEDEPSNDNLY) lie on the Extracellular side of the membrane. A helical transmembrane segment spans residues 130 to 150 (LGIVLAAVVIVTGCFSYYQEA). The Cytoplasmic segment spans residues 151 to 286 (KSSKIMDSFK…VGQTPIAMEI (136 aa)). Residues 212 to 227 (DNSSLTGESEPQTRSP) are compositionally biased toward polar residues. Residues 212 to 231 (DNSSLTGESEPQTRSPEFTH) form a disordered region. Residues 287–306 (EHFIQLITGVAVFLGVSFFV) traverse the membrane as a helical segment. Residues 307-318 (LSLILGYSWLEA) are Extracellular-facing. Residues 319-336 (VIFLIGIIVANVPEGLLA) form a helical membrane-spanning segment. Residues 337–769 (TVTVCLTLTA…EEGRLIFDNL (433 aa)) are Cytoplasmic-facing. Asp374 serves as the catalytic 4-aspartylphosphate intermediate. A phosphoserine mark is found at Ser439, Ser450, Ser496, and Ser559. A Phosphothreonine modification is found at Thr570. A phosphoserine mark is found at Ser587 and Ser672. Residues Asp714 and Asp718 each contribute to the Mg(2+) site. The chain crosses the membrane as a helical span at residues 770-789 (KKSIAYTLTSNIPEITPFLL). Residues 790-799 (FIIANIPLPL) are Extracellular-facing. Residues 800–820 (GTVTILCIDLGTDMVPAISLA) form a helical membrane-spanning segment. The Cytoplasmic portion of the chain corresponds to 821 to 840 (YEAAESDIMKRQPRNSQTDK). Ser826 bears the Phosphoserine mark. The chain crosses the membrane as a helical span at residues 841–863 (LVNERLISMAYGQIGMIQALGGF). Residues 864 to 915 (FTYFVILAENGFLPSRLLGIRLDWDDRTTNDLEDSYGQEWTYEQRKVVEFTC) are Extracellular-facing. Residues 916-935 (HTAFFASIVVVQWADLIICK) traverse the membrane as a helical segment. The Cytoplasmic segment spans residues 936 to 948 (TRRNSVFQQGMKN). Ser940 is modified (phosphoserine; by PKA). A helical membrane pass occupies residues 949 to 967 (KILIFGLLEETALAAFLSY). Residues 968–982 (CPGMGVALRMYPLKV) lie on the Extracellular side of the membrane. A helical transmembrane segment spans residues 983 to 1003 (TWWFCAFPYSLLIFIYDEVRK). The Cytoplasmic portion of the chain corresponds to 1004-1020 (LILRRYPGGWVEKETYY).

The protein belongs to the cation transport ATPase (P-type) (TC 3.A.3) family. Type IIC subfamily. The sodium/potassium-transporting ATPase is composed of a catalytic alpha subunit, an auxiliary non-catalytic beta subunit and an additional regulatory subunit. Interacts with regulatory subunit FXYD1.

Its subcellular location is the membrane. The protein resides in the cell membrane. It catalyses the reaction K(+)(out) + Na(+)(in) + ATP + H2O = K(+)(in) + Na(+)(out) + ADP + phosphate + H(+). In terms of biological role, this is the catalytic component of the active enzyme, which catalyzes the hydrolysis of ATP coupled with the exchange of sodium and potassium ions across the plasma membrane. This action creates the electrochemical gradient of sodium and potassium ions, providing the energy for active transport of various nutrients. This is Sodium/potassium-transporting ATPase subunit alpha-2 (Atp1a2) from Mus musculus (Mouse).